The following is a 212-amino-acid chain: Ribonuclease HII (212 aa).

The region spanning 1–206 (MARFGVDEAG…SRDALGAAEQ (206 aa)) is the RNase H type-2 domain. 3 residues coordinate a divalent metal cation: D7, E8, and D100.

It belongs to the RNase HII family. Mn(2+) is required as a cofactor. Requires Mg(2+) as cofactor.

It is found in the cytoplasm. It catalyses the reaction Endonucleolytic cleavage to 5'-phosphomonoester.. Functionally, endonuclease that specifically degrades the RNA of RNA-DNA hybrids. The protein is Ribonuclease HII of Halobacterium salinarum (strain ATCC 29341 / DSM 671 / R1).